Consider the following 132-residue polypeptide: uncharacterized protein (132 aa).

Residues 10-30 (LVLFFTIILIALCPFVYYLWD) traverse the membrane as a helical segment. Positions 50 to 79 (KNCSTEIEHAIEEHKRKNKEKKEAKEKRLA) form a coiled coil.

It is found in the membrane. This is an uncharacterized protein from Invertebrate iridescent virus 6 (IIV-6).